A 199-amino-acid chain; its full sequence is MVKMLVLYYSAYGHMEQMAKAAAEGAREGGAEVTLKRVPELVPEEVAKASHYKIDQEAPIATPGELADYDAIIIGTATRYGMMASQMKNFLDQTGGLWAKGALINKVGSVMVSTATQYGGAELALISTQWQMQHHGMIIVPLSYAYREQMGNDVVRGGAPYGMTTTADGDGSRQPSAQELDGARFQGRRVAEITAKLHG.

The region spanning 4 to 190 (MLVLYYSAYG…DGARFQGRRV (187 aa)) is the Flavodoxin-like domain. Residues 10-15 (SAYGHM) and 78-80 (TRY) contribute to the FMN site. Tyrosine 12 contacts NAD(+). Substrate is bound at residue tryptophan 98. Residues 113–119 (STATQYG) and histidine 134 each bind FMN. Positions 161 to 181 (YGMTTTADGDGSRQPSAQELD) are disordered. Positions 163-177 (MTTTADGDGSRQPSA) are enriched in polar residues.

This sequence belongs to the WrbA family. The cofactor is FMN.

The enzyme catalyses a quinone + NADH + H(+) = a quinol + NAD(+). It catalyses the reaction a quinone + NADPH + H(+) = a quinol + NADP(+). The chain is NAD(P)H dehydrogenase (quinone) from Brucella canis (strain ATCC 23365 / NCTC 10854 / RM-666).